We begin with the raw amino-acid sequence, 229 residues long: MDNTSFEKREFISVWVRDPQVHKEDFWHTYISYEICLHTNSMCFRKKTSCVRRRYSEFVWLRHKLQDNALLIELPKLPPWNPFFNLNNEFHITQRMQGLQQFLEAVLQTPLLLSDSRLHLFLQSQLSIAKMDACAQGHTHYTVAQAIQRCGGEARFPVEEQHQEDSKTCCDSDCDSTTSSGLGCSIEPATLVEQDLSHNERFAHEFQATNPEAELCSSLSSSPHGHSVI.

Residues 11–128 form the PX domain; that stretch reads FISVWVRDPQ…HLFLQSQLSI (118 aa). Positions 54 and 95 each coordinate a 1,2-diacyl-sn-glycero-3-phospho-(1D-myo-inositol-3-phosphate).

It belongs to the sorting nexin family.

The protein localises to the cytoplasm. The protein resides in the endosome membrane. It localises to the cytoskeleton. It is found in the microtubule organizing center. Its subcellular location is the centrosome. Its function is as follows. Probable phosphoinositide-binding protein involved in protein sorting and membrane trafficking in endosomes. May play a role in cilium biogenesis through regulation of the transport and the localization of proteins to the cilium. The polypeptide is Sorting nexin-10A (snx10a) (Danio rerio (Zebrafish)).